Reading from the N-terminus, the 630-residue chain is Pentatricopeptide repeat-containing protein At2g03880, mitochondrial (630 aa).

The N-terminal 76 residues, 1–76 (MKSVMSKIKL…LIKCCISNRA (76 aa)), are a transit peptide targeting the mitochondrion. PPR repeat units follow at residues 60–94 (DSATYSELIKCCISNRAVHEGNLICRHLYFNGHRP), 95–125 (MMFLVNVLINMYVKFNLLNDAHQLFDQMPQR), 126–160 (NVISWTTMISAYSKCKIHQKALELLVLMLRDNVRP), 161–192 (NVYTYSSVLRSCNGMSDVRMLHCGIIKEGLES), 193–223 (DVFVRSALIDVFAKLGEPEDALSVFDEMVTG), 224–258 (DAIVWNSIIGGFAQNSRSDVALELFKRMKRAGFIA), 259–289 (EQATLTSVLRACTGLALLELGMQAHVHIVKY), 292–322 (DLILNNALVDMYCKCGSLEDALRVFNQMKER), 323–357 (DVITWSTMISGLAQNGYSQEALKLFERMKSSGTKP), 358–388 (NYITIVGVLFACSHAGLLEDGWYYFRSMKKL), and 394–424 (VREHYGCMIDLLGKAGKLDDAVKLLNEMECE). The interval 429–504 (TWRTLLGACR…EPGCSWIEVN (76 aa)) is type E motif. The segment at 505 to 535 (KQIHAFIIGDNSHPQIVEVSKKLNQLIHRLT) is type E(+) motif. The type DYW motif stretch occupies residues 536–630 (GIGYVPETNF…DGKCSCGDYW (95 aa)).

Belongs to the PPR family. PCMP-H subfamily.

It localises to the mitochondrion. This Arabidopsis thaliana (Mouse-ear cress) protein is Pentatricopeptide repeat-containing protein At2g03880, mitochondrial (PCMP-H44).